We begin with the raw amino-acid sequence, 547 residues long: Hydroxylamine reductase (547 aa).

Cys5, Cys8, Cys17, and Cys23 together coordinate [4Fe-4S] cluster. The hybrid [4Fe-2O-2S] cluster site is built by His242, Glu266, Cys310, Cys401, Cys429, Cys454, Glu489, and Lys491. Cysteine persulfide is present on Cys401.

Belongs to the HCP family. [4Fe-4S] cluster serves as cofactor. Hybrid [4Fe-2O-2S] cluster is required as a cofactor.

It localises to the cytoplasm. It catalyses the reaction A + NH4(+) + H2O = hydroxylamine + AH2 + H(+). Its function is as follows. Catalyzes the reduction of hydroxylamine to form NH(3) and H(2)O. This chain is Hydroxylamine reductase, found in Thermoanaerobacter pseudethanolicus (strain ATCC 33223 / 39E) (Clostridium thermohydrosulfuricum).